The following is a 167-amino-acid chain: Insertion element IS1 2 protein InsB (167 aa).

This sequence belongs to the transposase 27 family.

In terms of biological role, absolutely required for transposition of IS1. This Escherichia coli (strain K12) protein is Insertion element IS1 2 protein InsB (insB2).